The sequence spans 241 residues: Probable transcriptional regulatory protein azo0574 (241 aa).

The segment at 1 to 21 (MAGHSKWANIQHRKGRQDAKR) is disordered.

This sequence belongs to the TACO1 family.

The protein localises to the cytoplasm. The polypeptide is Probable transcriptional regulatory protein azo0574 (Azoarcus sp. (strain BH72)).